The primary structure comprises 110 residues: Large ribosomal subunit protein uL24 (110 aa).

This sequence belongs to the universal ribosomal protein uL24 family. Part of the 50S ribosomal subunit.

In terms of biological role, one of two assembly initiator proteins, it binds directly to the 5'-end of the 23S rRNA, where it nucleates assembly of the 50S subunit. Its function is as follows. One of the proteins that surrounds the polypeptide exit tunnel on the outside of the subunit. This Roseiflexus sp. (strain RS-1) protein is Large ribosomal subunit protein uL24.